The following is a 282-amino-acid chain: Nucleotide-binding protein XCC2806 (282 aa).

5 to 12 (GLSGSGKS) serves as a coordination point for ATP. 57–60 (DVRS) provides a ligand contact to GTP.

Belongs to the RapZ-like family.

Displays ATPase and GTPase activities. This Xanthomonas campestris pv. campestris (strain ATCC 33913 / DSM 3586 / NCPPB 528 / LMG 568 / P 25) protein is Nucleotide-binding protein XCC2806.